The chain runs to 93 residues: Small ribosomal subunit protein uS19 (93 aa).

Belongs to the universal ribosomal protein uS19 family.

Protein S19 forms a complex with S13 that binds strongly to the 16S ribosomal RNA. The sequence is that of Small ribosomal subunit protein uS19 from Clostridium perfringens (strain ATCC 13124 / DSM 756 / JCM 1290 / NCIMB 6125 / NCTC 8237 / Type A).